The primary structure comprises 637 residues: tRNA uridine 5-carboxymethylaminomethyl modification enzyme MnmG (637 aa).

18–23 (GAGHAG) contributes to the FAD binding site. 281–295 (GPRYCPSIEDKIVRF) is a binding site for NAD(+).

The protein belongs to the MnmG family. As to quaternary structure, homodimer. Heterotetramer of two MnmE and two MnmG subunits. FAD serves as cofactor.

The protein resides in the cytoplasm. Functionally, NAD-binding protein involved in the addition of a carboxymethylaminomethyl (cmnm) group at the wobble position (U34) of certain tRNAs, forming tRNA-cmnm(5)s(2)U34. This is tRNA uridine 5-carboxymethylaminomethyl modification enzyme MnmG from Ligilactobacillus salivarius (strain UCC118) (Lactobacillus salivarius).